Consider the following 399-residue polypeptide: Probable 2-isopropylmalate synthase (399 aa).

The Pyruvate carboxyltransferase domain occupies 20–272 (VRIFDTTLRD…RTGVNTKLLY (253 aa)). Positions 29, 210, 212, and 246 each coordinate a divalent metal cation.

It belongs to the alpha-IPM synthase/homocitrate synthase family. As to quaternary structure, homodimer. A divalent metal cation serves as cofactor.

The enzyme catalyses 3-methyl-2-oxobutanoate + acetyl-CoA + H2O = (2S)-2-isopropylmalate + CoA + H(+). It participates in amino-acid biosynthesis; L-leucine biosynthesis; L-leucine from 3-methyl-2-oxobutanoate: step 1/4. Its function is as follows. Catalyzes the condensation of the acetyl group of acetyl-CoA with 3-methyl-2-oxobutanoate (2-oxoisovalerate) to form 3-carboxy-3-hydroxy-4-methylpentanoate (2-isopropylmalate). The protein is Probable 2-isopropylmalate synthase (leuA) of Ignicoccus hospitalis (strain KIN4/I / DSM 18386 / JCM 14125).